A 199-amino-acid polypeptide reads, in one-letter code: NADH-ubiquinone oxidoreductase chain 6 (199 aa).

A run of 5 helical transmembrane segments spans residues 1-21 (MILF…VIRA), 27-47 (SVLF…LLGL), 49-69 (FFAM…FLFV), 87-107 (YLPV…LMVD), and 150-170 (FFLF…AIVL).

Belongs to the complex I subunit 6 family.

The protein localises to the mitochondrion membrane. It catalyses the reaction a ubiquinone + NADH + 5 H(+)(in) = a ubiquinol + NAD(+) + 4 H(+)(out). Functionally, core subunit of the mitochondrial membrane respiratory chain NADH dehydrogenase (Complex I) that is believed to belong to the minimal assembly required for catalysis. Complex I functions in the transfer of electrons from NADH to the respiratory chain. The immediate electron acceptor for the enzyme is believed to be ubiquinone. This chain is NADH-ubiquinone oxidoreductase chain 6 (ND6), found in Marchantia polymorpha (Common liverwort).